The following is a 156-amino-acid chain: Large ribosomal subunit protein uL15 (156 aa).

The segment covering 1 to 11 (MKLNDLRDKPG) has biased composition (basic and acidic residues). Positions 1–40 (MKLNDLRDKPGSVKARKRVGRGIGSGTGKTGGRGVKGQKS) are disordered. The span at 21 to 35 (RGIGSGTGKTGGRGV) shows a compositional bias: gly residues.

This sequence belongs to the universal ribosomal protein uL15 family. Part of the 50S ribosomal subunit.

In terms of biological role, binds to the 23S rRNA. The sequence is that of Large ribosomal subunit protein uL15 from Brucella anthropi (strain ATCC 49188 / DSM 6882 / CCUG 24695 / JCM 21032 / LMG 3331 / NBRC 15819 / NCTC 12168 / Alc 37) (Ochrobactrum anthropi).